The primary structure comprises 375 residues: MKGPEKAYLVSDKATKMYSLTMDSSEKNNCGKPPLQDDENPHIKYHCHNNNTKAYDARQREQTSAKKKLCIASLICFVFISAEIVGGYIAGSLAVVTDAAHLLVDLSSFFISLGSLWLSSKSSTMRLTFGWYRAEILGALMSIITIWLVTGVLVYLAIERIIRPDYTIDGTVMLITSACALGANVVLALILHQSGHGHSHAGGKHEHMASEYKPQTNASIRAAFIHVIGDLFQSISVLISALIIYFKPEYKIADPICTFIFSIFVLITTVTVLRDLLNILMEGTPRGIHYSDVKQSILAVDGVKSVHSLHLWALTMNQVILSAHIATDILGESKRILKDVTQNVCSSFPFHSVTIQVEPVEEQSPECMFCYEPTQ.

Over 1–68 (MKGPEKAYLV…QREQTSAKKK (68 aa)) the chain is Cytoplasmic. Residues His-46, Cys-47, and His-48 each coordinate Zn(2+). The HCH Motif; seals regulatory zinc-binding pocket signature appears at 46–48 (HCH). The helical transmembrane segment at 69–89 (LCIASLICFVFISAEIVGGYI) threads the bilayer. The Lumenal, vesicle portion of the chain corresponds to 90–98 (AGSLAVVTD). A helical membrane pass occupies residues 99–119 (AAHLLVDLSSFFISLGSLWLS). His-101 and Asp-105 together coordinate Zn(2+). At 120 to 135 (SKSSTMRLTFGWYRAE) the chain is on the cytoplasmic side. A helical transmembrane segment spans residues 136-156 (ILGALMSIITIWLVTGVLVYL). Topologically, residues 157 to 170 (AIERIIRPDYTIDG) are lumenal, vesicle. The chain crosses the membrane as a helical span at residues 171 to 191 (TVMLITSACALGANVVLALIL). Over 192–223 (HQSGHGHSHAGGKHEHMASEYKPQTNASIRAA) the chain is Cytoplasmic. A helical transmembrane segment spans residues 224-244 (FIHVIGDLFQSISVLISALII). 2 residues coordinate Zn(2+): His-226 and Asp-230. Residues 245 to 251 (YFKPEYK) lie on the Lumenal, vesicle side of the membrane. A helical transmembrane segment spans residues 252 to 272 (IADPICTFIFSIFVLITTVTV). Topologically, residues 273 to 375 (LRDLLNILME…ECMFCYEPTQ (103 aa)) are cytoplasmic. 6 residues coordinate Zn(2+): His-307, His-324, His-351, Glu-358, Cys-367, and Cys-370.

This sequence belongs to the cation diffusion facilitator (CDF) transporter (TC 2.A.4) family. SLC30A subfamily. As to quaternary structure, homodimer.

The protein localises to the cytoplasmic vesicle. It localises to the secretory vesicle membrane. Its subcellular location is the cell membrane. It carries out the reaction Zn(2+)(in) + 2 H(+)(out) = Zn(2+)(out) + 2 H(+)(in). Its function is as follows. Proton-coupled zinc ion antiporter mediating the entry of zinc into the lumen of pancreatic beta cell secretory granules, thereby regulating insulin secretion. This chain is Proton-coupled zinc antiporter SLC30A8 (slc30a8), found in Xenopus laevis (African clawed frog).